The sequence spans 2209 residues: Genome polyprotein (2209 aa).

A lipid anchor (N-myristoyl glycine; by host) is attached at Gly-2. The Cytoplasmic portion of the chain corresponds to 2 to 1520 (GAQVSSQKVG…NINRAMTILQ (1519 aa)). An amphipathic alpha-helix region spans residues 580–600 (GLGQMLESMIDNTVRETVGAA). Residues 599 to 619 (AATSRDALPNTEASGPTHSKE) are disordered. Catalysis depends on for protease 2A activity residues His-901 and Asp-919. The Zn(2+) site is built by Cys-936 and Cys-938. The active-site For protease 2A activity is Cys-990. Zn(2+)-binding residues include Cys-996 and His-998. Residues 1128-1200 (GDSWLKKFTE…HQSCPSQEHQ (73 aa)) are membrane-binding. An oligomerization region spans residues 1128–1266 (GDSWLKKFTE…SPGTGKSVAT (139 aa)). The interval 1149–1153 (SNKIS) is RNA-binding. An SF3 helicase domain is found at 1232–1388 (EHTINNYIQF…NEYSRDGKLN (157 aa)). An ATP-binding site is contributed by 1256-1263 (GSPGTGKS). Residues Cys-1396, Cys-1399, Cys-1408, and Cys-1413 each contribute to the Zn(2+) site. The C4-type zinc-finger motif lies at 1396–1413 (CKNCHQPANFKRCCPLVC). The RNA-binding stretch occupies residues 1440–1447 (ERNRRSNI). The oligomerization stretch occupies residues 1451–1456 (MEALFQ). Residues 1521–1536 (AVTTFAAVAGVVYVMY) lie within the membrane without spanning it. Over 1537–2209 (KLFAGHQGAY…TLYRRWLDSF (673 aa)) the chain is Cytoplasmic. Residue Tyr-1546 is modified to O-(5'-phospho-RNA)-tyrosine. Tyr-1546 is modified (O-UMP-tyrosine; transient). The Peptidase C3 domain occupies 1566-1744 (GPGFDYAVAM…FAAALKRSYF (179 aa)). Residues His-1605, Glu-1636, and Cys-1712 each act as for protease 3C activity in the active site. Positions 1975-2090 (EKLFAFDYTG…SYPHEVDASL (116 aa)) constitute a RdRp catalytic domain. Mg(2+) contacts are provided by Asp-1981 and Asp-2076.

The protein belongs to the picornaviruses polyprotein family. As to quaternary structure, interacts with capsid protein VP1 and capsid protein VP3 to form heterotrimeric protomers. Interacts with capsid protein VP0, and capsid protein VP3 to form heterotrimeric protomers. Five protomers subsequently associate to form pentamers which serve as building blocks for the capsid. Interacts with capsid protein VP2, capsid protein VP3 and capsid protein VP4 following cleavage of capsid protein VP0. Interacts with human PVR. In terms of assembly, interacts with capsid protein VP1 and capsid protein VP3 in the mature capsid. As to quaternary structure, interacts with capsid protein VP0 and capsid protein VP1 to form heterotrimeric protomers. Five protomers subsequently associate to form pentamers which serve as building blocks for the capsid. Interacts with capsid protein VP4 in the mature capsid. Interacts with protein 2C; this interaction may be important for virion morphogenesis. Interacts with capsid protein VP1 and capsid protein VP3. In terms of assembly, homodimer. As to quaternary structure, homohexamer; forms a hexameric ring structure with 6-fold symmetry characteristic of AAA+ ATPases. Interacts (via N-terminus) with host RTN3 (via reticulon domain); this interaction is important for viral replication. Interacts with capsid protein VP3; this interaction may be important for virion morphogenesis. Interacts with protein 3CD. In terms of assembly, homodimer. Interacts with host GBF1. Interacts (via GOLD domain) with host ACBD3 (via GOLD domain); this interaction allows the formation of a viral protein 3A/ACBD3 heterotetramer with a 2:2 stoichiometry, which will stimulate the recruitment of host PI4KB in order to synthesize PI4P at the viral RNA replication sites. As to quaternary structure, interacts with RNA-directed RNA polymerase. Interacts with protein 3AB and with RNA-directed RNA polymerase. In terms of assembly, interacts with Viral protein genome-linked and with protein 3CD. Mg(2+) serves as cofactor. Post-translationally, specific enzymatic cleavages in vivo by the viral proteases yield processing intermediates and the mature proteins. In terms of processing, myristoylation is required for the formation of pentamers during virus assembly. Further assembly of 12 pentamers and a molecule of genomic RNA generates the provirion. During virion maturation, immature virions are rendered infectious following cleavage of VP0 into VP4 and VP2. This maturation seems to be an autocatalytic event triggered by the presence of RNA in the capsid and it is followed by a conformational change infectious virion. Post-translationally, myristoylation is required during RNA encapsidation and formation of the mature virus particle. In terms of processing, VPg is uridylylated by the polymerase into VPg-pUpU. This acts as a nucleotide-peptide primer for the genomic RNA replication.

The protein resides in the virion. It localises to the host cytoplasm. Its subcellular location is the host cytoplasmic vesicle membrane. It is found in the host nucleus. It catalyses the reaction RNA(n) + a ribonucleoside 5'-triphosphate = RNA(n+1) + diphosphate. It carries out the reaction Selective cleavage of Tyr-|-Gly bond in the picornavirus polyprotein.. The enzyme catalyses a ribonucleoside 5'-triphosphate + H2O = a ribonucleoside 5'-diphosphate + phosphate + H(+). The catalysed reaction is Selective cleavage of Gln-|-Gly bond in the poliovirus polyprotein. In other picornavirus reactions Glu may be substituted for Gln, and Ser or Thr for Gly.. Its activity is regulated as follows. Replication or transcription is subject to high level of random mutations by the nucleotide analog ribavirin. In terms of biological role, forms an icosahedral capsid of pseudo T=3 symmetry with capsid proteins VP2 and VP3. The capsid is 300 Angstroms in diameter, composed of 60 copies of each capsid protein and enclosing the viral positive strand RNA genome. Capsid protein VP1 mainly forms the vertices of the capsid. Capsid protein VP1 interacts with host cell receptor PVR to provide virion attachment to target host epithelial cells. This attachment induces virion internalization predominantly through clathrin- and caveolin-independent endocytosis in Hela cells and through caveolin-mediated endocytosis in brain microvascular endothelial cells. Tyrosine kinases are probably involved in the entry process. Virus binding to PVR induces increased junctional permeability and rearrangement of junctional proteins. Modulation of endothelial tight junctions, as well as cytolytic infection of endothelial cells themselves, may result in loss of endothelial integrity which may help the virus to reach the CNS. After binding to its receptor, the capsid undergoes conformational changes. Capsid protein VP1 N-terminus (that contains an amphipathic alpha-helix) and capsid protein VP4 are externalized. Together, they shape a pore in the host membrane through which viral genome is translocated to host cell cytoplasm. Its function is as follows. Forms an icosahedral capsid of pseudo T=3 symmetry with capsid proteins VP1 and VP3. The capsid is 300 Angstroms in diameter, composed of 60 copies of each capsid protein and enclosing the viral positive strand RNA genome. Forms an icosahedral capsid of pseudo T=3 symmetry with capsid proteins VP2 and VP1. The capsid is 300 Angstroms in diameter, composed of 60 copies of each capsid protein and enclosing the viral positive strand RNA genome. Functionally, lies on the inner surface of the capsid shell. After binding to the host receptor, the capsid undergoes conformational changes. Capsid protein VP4 is released, Capsid protein VP1 N-terminus is externalized, and together, they shape a pore in the host membrane through which the viral genome is translocated into the host cell cytoplasm. In terms of biological role, component of immature procapsids, which is cleaved into capsid proteins VP4 and VP2 after maturation. Allows the capsid to remain inactive before the maturation step. Its function is as follows. Cysteine protease that cleaves viral polyprotein and specific host proteins. It is responsible for the autocatalytic cleavage between the P1 and P2 regions, which is the first cleavage occurring in the polyprotein. Also cleaves the host translation initiation factor EIF4G1, in order to shut down the capped cellular mRNA translation. Inhibits the host nucleus-cytoplasm protein and RNA trafficking by cleaving host members of the nuclear pores including NUP98, NUP62 and NUP153. Counteracts stress granule formation probably by antagonizing its assembly or promoting its dissassembly. Cleaves and inhibits host IFIH1/MDA5, thereby inhibiting the type-I IFN production and the establishment of the antiviral state. Cleaves and inhibits host MAVS, thereby inhibiting the type-I IFN production and the establishment of the antiviral state. Plays an essential role in the virus replication cycle by acting as a viroporin. Creates a pore in the host endoplasmic reticulum and as a consequence releases Ca2+ in the cytoplasm of infected cell. In turn, high levels of cytoplasmic calcium may trigger membrane trafficking and transport of viral ER-associated proteins to viroplasms, sites of viral genome replication. Functionally, induces and associates with structural rearrangements of intracellular membranes. Displays RNA-binding, nucleotide binding and NTPase activities. May play a role in virion morphogenesis and viral RNA encapsidation by interacting with the capsid protein VP3. In terms of biological role, localizes the viral replication complex to the surface of membranous vesicles. Together with protein 3CD binds the Cis-Active RNA Element (CRE) which is involved in RNA synthesis initiation. Acts as a cofactor to stimulate the activity of 3D polymerase, maybe through a nucleid acid chaperone activity. Its function is as follows. Localizes the viral replication complex to the surface of membranous vesicles. It inhibits host cell endoplasmic reticulum-to-Golgi apparatus transport and causes the disassembly of the Golgi complex, possibly through GBF1 interaction. This would result in depletion of MHC, trail receptors and IFN receptors at the host cell surface. Plays an essential role in viral RNA replication by recruiting ACBD3 and PI4KB at the viral replication sites, thereby allowing the formation of the rearranged membranous structures where viral replication takes place. Acts as a primer for viral RNA replication and remains covalently bound to viral genomic RNA. VPg is uridylylated prior to priming replication into VPg-pUpU. The oriI viral genomic sequence may act as a template for this. The VPg-pUpU is then used as primer on the genomic RNA poly(A) by the RNA-dependent RNA polymerase to replicate the viral genome. During genome replication, the VPg-RNA linkage is removed by the host TDP2, thereby accelerating replication. During the late stage of the replication cycle, host TDP2 is excluded from sites of viral RNA synthesis and encapsidation, allowing for the generation of progeny virions. Functionally, involved in the viral replication complex and viral polypeptide maturation. It exhibits protease activity with a specificity and catalytic efficiency that is different from protease 3C. Protein 3CD binds to the 5'UTR of the viral genome. In terms of biological role, major viral protease that mediates proteolytic processing of the polyprotein. Cleaves host EIF5B, contributing to host translation shutoff. Cleaves also host PABPC1, contributing to host translation shutoff. Cleaves host RIGI and thus contributes to the inhibition of type I interferon production. Cleaves host NLRP1, triggers host N-glycine-mediated degradation of the autoinhibitory NLRP1 N-terminal fragment. Inhibits the integrated stress response (ISR) in the infected cell by cleaving host G3BP1. Stress granule formation is thus inhibited, which allows protein synthesis and viral replication. Its function is as follows. Replicates the viral genomic RNA on the surface of intracellular membranes. May form linear arrays of subunits that propagate along a strong head-to-tail interaction called interface-I. Covalently attaches UMP to a tyrosine of VPg, which is used to prime RNA synthesis. The positive stranded RNA genome is first replicated at virus induced membranous vesicles, creating a dsRNA genomic replication form. This dsRNA is then used as template to synthesize positive stranded RNA genomes. ss(+)RNA genomes are either translated, replicated or encapsidated. This Homo sapiens (Human) protein is Genome polyprotein.